Reading from the N-terminus, the 219-residue chain is Transmembrane emp24 domain-containing protein 10 (219 aa).

A signal peptide spans 1–31 (MSGWSGPLARRGPGPLALLFLFLLGPSSVLA). A required for interaction with STX17 region spans residues 1 to 142 (MSGWSGPLAR…KNYEEIAKVE (142 aa)). Topologically, residues 32 to 185 (ISFHLPVNSR…RDTNESTNTR (154 aa)) are lumenal. The GOLD domain maps to 41–193 (RKCLREEIHK…TRVLYFSIFS (153 aa)). The tract at residues 147–178 (LEVELRRLEDLSESIVNDFAYMKKREEEMRDT) is required for TMED10 and TMED2 cis-Golgi network localization. Dimethylated arginine occurs at positions 171 and 176. N179 carries N-linked (GlcNAc...) asparagine glycosylation. Residues 186–206 (VLYFSIFSMFCLIGLATWQVF) form a helical membrane-spanning segment. Positions 204–219 (QVFYLRRFFKAKKLIE) are interaction with COPG1. Residues 207–219 (YLRRFFKAKKLIE) are Cytoplasmic-facing. Residues 207-219 (YLRRFFKAKKLIE) are interaction with ARF1 and IL1B. The COPII vesicle coat-binding signature appears at 211–212 (FF). The COPI vesicle coat-binding signature appears at 211–219 (FFKAKKLIE).

The protein belongs to the EMP24/GP25L family. As to quaternary structure, predominantly dimeric and to a lesser extent monomeric in the ER. Monomer and dimer in ERGIC and cis-Golgi network. Forms homooligomer (via GOLD domain); the assembly is promoted by direct binding with leaderless cargos and may form a protein channel that facilitates cargo entry into the ERGIC. Forms heterooligomeric complexes with other members of the p24 family such as TMED2, TMED7 and TMED9. Interacts (via GOLD domain) with TMED2 (via GOLD domain); the complex is required for export of TMED10 from the ER to the cis-Golgi network; the complex is proposed to be involved in cis-Golgi network dynamics and / or biogenesis. Associates with the COPI vesicle coat subunits (coatomer). Tetramerization of the cytoplasmic domain at the Golgi membrane in vitro; the complex is proposed to interact with COPI coatomer and induce budding of the vesicles. Interacts with COPG1; the interaction involves TMED10 homodimer. Interacts with ARF1 (GDP-bound); the interaction probably involves a TMED10 oligomer. Interacts with SEC23A, SEC24B, SEC24C and SEC24D components of the coat protein complex II/COPII, indicative of an association of TMED10 with the COPII vesicle coat. Interacts with CD59. Interacts with MPPE1/PGAP5; the complex might recruit and sort GPI-anchored proteins to the ER-exit site, or the interaction might lead to recycling of PGAP5 between the ER and the Golgi. Interacts with F2LR1/PAR2. Interacts with KDELR2/ERD2; the interaction is disrupted by KDELR2 ligand. Found in a complex composed at least of SURF4, TMED2 and TMED10. Associates with the presenilin-dependent gamma-secretase complex. Interacts with STX17; the interaction is direct. Interacts with IL-1; the interaction is direct. Interacts with RAB21 (active GTP-bound form); the interaction is indirect and regulates TMED10 abundance and localization at the Golgi.

It is found in the endoplasmic reticulum membrane. The protein resides in the endoplasmic reticulum-Golgi intermediate compartment membrane. The protein localises to the golgi apparatus membrane. It localises to the golgi apparatus. Its subcellular location is the cis-Golgi network membrane. It is found in the trans-Golgi network membrane. The protein resides in the cytoplasmic vesicle. The protein localises to the secretory vesicle membrane. It localises to the cell membrane. Its subcellular location is the melanosome. Its function is as follows. Cargo receptor involved in protein vesicular trafficking and quality control in the endoplasmic reticulum (ER) and Golgi. The p24 protein family is a group of transmembrane proteins that bind coat protein complex I/COPI and coat protein complex II/COPII involved in vesicular trafficking between the membranes. Acts at the lumenal side for incorporation of secretory cargo molecules into transport vesicles and involved in vesicle coat formation at the cytoplasmic side. Mainly functions in the early secretory pathway and cycles between the ER, ER-Golgi intermediate compartment (ERGIC) and Golgi, mediating cargo transport through COPI and COPII-coated vesicles. In COPII vesicle-mediated anterograde transport, involved in the transport of GPI-anchored proteins by acting together with TMED2 as their cargo receptor; the function specifically implies SEC24C and SEC24D of the COPII vesicle coat and lipid raft-like microdomains of the ER. Recognizes GPI anchors structural remodeled in the ER by the GPI inositol-deacylase/PGAP1 and the metallophosphoesterase MPPE1/PGAP5. In COPI vesicle-mediated retrograde transport, involved in the biogenesis of COPI vesicles and vesicle coat recruitment. Involved in trafficking of amyloid beta A4 protein and soluble APP-beta release (independent from the modulation of gamma-secretase activity). Involved in the KDELR2-mediated retrograde transport of the toxin A subunit (CTX-A-K63)together with COPI and the COOH terminus of KDELR2. On Golgi membranes, acts as a primary receptor for ARF1-GDP, a GTP-binding protein involved in COPI-vesicle formation. Increases coatomer-dependent GTPase-activating activity of ARFGAP2 which mediates the hydrolysis of ARF1-bound GTP and therefore modulates protein trafficking from the Golgi apparatus. Involved in the exocytic trafficking of G protein-coupled receptors F2LR1/PAR2 (trypsin and tryspin-like enzyme receptor), OPRM1 (opioid receptor) and P2RY4 (UTD and UDP receptor) from the Golgi to the plasma membrane, thus contributing to receptor resensitization. In addition to its cargo receptor activity, may also act as a protein channel after oligomerization, facilitating the post-translational entry of leaderless cytoplasmic cargo into the ERGIC. Involved in the translocation into ERGIC, the vesicle entry and the secretion of leaderless cargos (lacking the secretion signal sequence), including the mature form of interleukin 1/IL-1 family members, the alpha-crystallin B chain HSPB5, the carbohydrate-binding proteins galectin-1/LGALS1 and galectin-3/LGALS3, the microtubule-associated protein Tau/MAPT, and the annexin A1/ANXA1; the translocation process is dependent on cargo protein unfolding and enhanced by chaperones HSP90AB1 and HSP90B1/GRP9. Could also associates with the presenilin-dependent gamma-secretase complex in order to regulate gamma-cleavages of the amyloid beta A4 protein to yield amyloid-beta 40/Abeta40. This chain is Transmembrane emp24 domain-containing protein 10 (TMED10), found in Oryctolagus cuniculus (Rabbit).